The sequence spans 153 residues: MTRVILVQDVNGLGSVGDVVEVKAGYSRNYLVPKGMAVRWTEGAQKHIGDISAARRAREAAALQEARDIANTLAKEAVTRELRLAANAGEDGRLFGSVTAANIAKVLSSASGHKIDRGKIEIDSPIKTLGEHTVKVKLHPNVKVDINVVVYAE.

This sequence belongs to the bacterial ribosomal protein bL9 family.

In terms of biological role, binds to the 23S rRNA. This is Large ribosomal subunit protein bL9 from Tropheryma whipplei (strain Twist) (Whipple's bacillus).